The primary structure comprises 446 residues: DNA repair protein RadA (446 aa).

The C4-type zinc finger occupies 10–27 (CSNCGNTSPKWSGQCFDC). 91 to 98 (GDPGIGKS) contributes to the ATP binding site. A RadA KNRFG motif motif is present at residues 250–254 (KNRFG). Positions 349–446 (EVYLSIAGGL…HLKDLKEIIR (98 aa)) are lon-protease-like.

The protein belongs to the RecA family. RadA subfamily.

DNA-dependent ATPase involved in processing of recombination intermediates, plays a role in repairing DNA breaks. Stimulates the branch migration of RecA-mediated strand transfer reactions, allowing the 3' invading strand to extend heteroduplex DNA faster. Binds ssDNA in the presence of ADP but not other nucleotides, has ATPase activity that is stimulated by ssDNA and various branched DNA structures, but inhibited by SSB. Does not have RecA's homology-searching function. The sequence is that of DNA repair protein RadA from Rickettsia felis (strain ATCC VR-1525 / URRWXCal2) (Rickettsia azadi).